Here is a 111-residue protein sequence, read N- to C-terminus: Putative splicing factor C222.18 (111 aa).

Positions 18-95 (HTLYIRNFGT…DIIFVEWAKS (78 aa)) constitute an RRM domain.

It belongs to the splicing factor SR family.

It localises to the nucleus. Its function is as follows. Has a role in pre-mRNA splicing where it is involved in spliceosome assembly. The polypeptide is Putative splicing factor C222.18 (Schizosaccharomyces pombe (strain 972 / ATCC 24843) (Fission yeast)).